We begin with the raw amino-acid sequence, 464 residues long: ERO1-like protein alpha (464 aa).

An N-terminal signal peptide occupies residues 1–23; the sequence is MGRGWGLLVGLLGVVWLLRSGQG. Disulfide bonds link cysteine 35-cysteine 48, cysteine 37-cysteine 46, cysteine 85-cysteine 387, cysteine 94-cysteine 99, cysteine 94-cysteine 130, cysteine 99-cysteine 104, cysteine 207-cysteine 237, and cysteine 390-cysteine 393. Serine 106, serine 142, and serine 144 each carry phosphoserine. FAD-binding residues include arginine 186, threonine 188, and tryptophan 199. The FAD site is built by serine 248 and histidine 251. A glycan (N-linked (GlcNAc...) asparagine) is linked at asparagine 276. 2 residues coordinate FAD: arginine 283 and arginine 296. A glycan (N-linked (GlcNAc...) asparagine) is linked at asparagine 380.

It belongs to the EROs family. In terms of assembly, predominantly monomer. May function both as a monomer and a homodimer. Interacts with PDILT. Interacts with ERP44; the interaction results in retention of ERO1A in the endoplasmic reticulum. It depends on FAD as a cofactor. N-glycosylated. In terms of processing, the Cys-94/Cys-99 and Cys-390/Cys-393 disulfide bonds constitute the redox-active center. The Cys-94/Cys-99 disulfide bond may accept electron from P4HB and funnel them to the active site disulfide Cys-390/Cys-393. The regulatory Cys-99/Cys-104 disulfide bond stabilizes the other regulatory bond Cys-94/Cys-130. Post-translationally, phosphorylated on Ser-144 by FAM20C in the Golgi which increases its enzymatic activity. Phosphorylation is induced by lactation. It is also induced by hypoxia and reductive stress.

Its subcellular location is the endoplasmic reticulum membrane. The protein resides in the golgi apparatus lumen. The protein localises to the secreted. It localises to the cell projection. It is found in the dendrite. Enzyme activity is tightly regulated to prevent the accumulation of reactive oxygen species in the endoplasmic reticulum. Reversibly down-regulated by the formation of disulfide bonds between the active site Cys-94 and Cys-130, and between Cys-99 and Cys-104. Glutathione may be required to regulate its activity in the endoplasmic reticulum. Its function is as follows. Oxidoreductase involved in disulfide bond formation in the endoplasmic reticulum. Efficiently reoxidizes P4HB/PDI, the enzyme catalyzing protein disulfide formation, in order to allow P4HB to sustain additional rounds of disulfide formation. Following P4HB reoxidation, passes its electrons to molecular oxygen via FAD, leading to the production of reactive oxygen species (ROS) in the cell. Required for the proper folding of immunoglobulins. Plays an important role in ER stress-induced, CHOP-dependent apoptosis by activating the inositol 1,4,5-trisphosphate receptor IP3R1. This is ERO1-like protein alpha from Rattus norvegicus (Rat).